Reading from the N-terminus, the 421-residue chain is Probable 26S proteasome regulatory subunit rpn6 (421 aa).

The 170-residue stretch at 221–390 folds into the PCI domain; the sequence is DFKTAYSYFY…GCLIVYDEPQ (170 aa).

The protein belongs to the proteasome subunit S9 family. Component of the lid subcomplex of the 19S proteasome regulatory particle complex (also named PA700 complex). The 26S proteasome consists of a 20S proteasome core and two 19S regulatory subunits.

Functionally, component of the lid subcomplex of the 26S proteasome, a multiprotein complex involved in the ATP-dependent degradation of ubiquitinated proteins. In the complex, rpn6 is required for proteasome assembly. The polypeptide is Probable 26S proteasome regulatory subunit rpn6 (rpn6) (Schizosaccharomyces pombe (strain 972 / ATCC 24843) (Fission yeast)).